Reading from the N-terminus, the 276-residue chain is 3-methyl-2-oxobutanoate hydroxymethyltransferase (276 aa).

Mg(2+)-binding residues include D46 and D85. Residues 46 to 47, D85, and K115 contribute to the 3-methyl-2-oxobutanoate site; that span reads DS. Residue E117 participates in Mg(2+) binding. E184 serves as the catalytic Proton acceptor.

It belongs to the PanB family. In terms of assembly, homodecamer; pentamer of dimers. It depends on Mg(2+) as a cofactor.

The protein localises to the cytoplasm. The enzyme catalyses 3-methyl-2-oxobutanoate + (6R)-5,10-methylene-5,6,7,8-tetrahydrofolate + H2O = 2-dehydropantoate + (6S)-5,6,7,8-tetrahydrofolate. It functions in the pathway cofactor biosynthesis; (R)-pantothenate biosynthesis; (R)-pantoate from 3-methyl-2-oxobutanoate: step 1/2. Its function is as follows. Catalyzes the reversible reaction in which hydroxymethyl group from 5,10-methylenetetrahydrofolate is transferred onto alpha-ketoisovalerate to form ketopantoate. In Heliobacterium modesticaldum (strain ATCC 51547 / Ice1), this protein is 3-methyl-2-oxobutanoate hydroxymethyltransferase.